Reading from the N-terminus, the 373-residue chain is 3-dehydroquinate synthase (373 aa).

Residues 67–72 (EGEETK), 101–105 (GVILD), 125–126 (TT), Lys-138, and Lys-147 each bind NAD(+). Residues Glu-180, His-240, and His-256 each coordinate Zn(2+).

This sequence belongs to the sugar phosphate cyclases superfamily. Dehydroquinate synthase family. NAD(+) serves as cofactor. Requires Co(2+) as cofactor. It depends on Zn(2+) as a cofactor.

The protein resides in the cytoplasm. It carries out the reaction 7-phospho-2-dehydro-3-deoxy-D-arabino-heptonate = 3-dehydroquinate + phosphate. Its pathway is metabolic intermediate biosynthesis; chorismate biosynthesis; chorismate from D-erythrose 4-phosphate and phosphoenolpyruvate: step 2/7. In terms of biological role, catalyzes the conversion of 3-deoxy-D-arabino-heptulosonate 7-phosphate (DAHP) to dehydroquinate (DHQ). The protein is 3-dehydroquinate synthase of Chlamydia trachomatis serovar A (strain ATCC VR-571B / DSM 19440 / HAR-13).